The sequence spans 1013 residues: NHS-like protein 3 (1013 aa).

Phosphoserine is present on lysine 17. Residues 20–195 (SAKAESDNRQ…PPGSRDAVRI (176 aa)) form a disordered region. A compositionally biased stretch (basic and acidic residues) spans 73-89 (QHQERQKLSKGGWDHGD). 2 stretches are compositionally biased toward polar residues: residues 90–99 (TQSIQSSQTG) and 106–120 (SIYS…SSTA). A Phosphoserine modification is found at serine 92. The residue at position 108 (tyrosine 108) is a Phosphotyrosine. A phosphoserine mark is found at serine 136, serine 143, and serine 159. The residue at position 160 (threonine 160) is a Phosphothreonine. The segment covering 168–178 (VQKELGLRNNR) has biased composition (basic and acidic residues). Serine 213 is subject to Phosphoserine. Arginine 318 is modified (asymmetric dimethylarginine). Residues serine 320, serine 325, serine 328, serine 336, serine 337, serine 339, and serine 340 each carry the phosphoserine modification. The disordered stretch occupies residues 330 to 1013 (RSLGRFSSAS…PGSDPQKKLV (684 aa)). Residues 336 to 361 (SSASSPRPRSRNASSSSDNWSHSQSS) show a composition bias toward low complexity. Over residues 362-375 (ETIVSDGSTLSSKG) the composition is skewed to polar residues. Phosphoserine occurs at positions 398, 402, and 407. Residues 408–427 (TAETSDTASIRSSGQLSGRS) show a composition bias toward polar residues. Low complexity-rich tracts occupy residues 484–493 (VGAVSCPPSS) and 515–530 (RTLS…SGTP). At threonine 529 the chain carries Phosphothreonine. The residue at position 543 (serine 543) is a Phosphoserine. The segment covering 564–577 (SVSSSLTSLCSSSS) has biased composition (low complexity). Threonine 591 carries the phosphothreonine modification. Residues 600–614 (PPHPKVPAPFSPPPS) are compositionally biased toward pro residues. Serine 610 bears the Phosphoserine mark. The segment covering 615–633 (KSKSSNQAAPVLAAPAVAP) has biased composition (low complexity). The span at 635–657 (QVSTIDTSPASPSMPQTTLTPAQ) shows a compositional bias: polar residues. Serine 667 and serine 671 each carry phosphoserine. Composition is skewed to pro residues over residues 668–683 (PPPS…PPPT) and 706–716 (PSWPPPPPPAP). Over residues 779–795 (PQKDSVGKHSGAPREDS) the composition is skewed to basic and acidic residues. Residues 814–829 (GASTGIPNPSPGSSAP) are compositionally biased toward polar residues. 3 positions are modified to phosphoserine: serine 838, serine 842, and serine 848. The span at 859–873 (ASSLAASESPASALP) shows a compositional bias: low complexity. Serine 909, serine 952, and serine 959 each carry phosphoserine. Positions 942–961 (KAPPPVARKPSVGVPPPSPS) are enriched in pro residues. Polar residues predominate over residues 964-975 (RTESLTAPSTNG).

Its function is as follows. Able to directly activate the TNF-NFkappaB signaling pathway. The chain is NHS-like protein 3 (Nhsl3) from Mus musculus (Mouse).